The primary structure comprises 312 residues: Putative B3 domain-containing protein Os10g0537100 (312 aa).

A DNA-binding region (TF-B3) is located at residues 35 to 153; it reads FEKVVTPSDV…RLFIDFRRRR (119 aa). 2 disordered regions span residues 161–182 and 286–312; these read FPPT…HPPL and LLQL…DLGL. Basic residues predominate over residues 170 to 180; the sequence is HSHHHHQRHHP. Low complexity predominate over residues 286 to 301; sequence LLQLPSPSSSTSSSTA.

The protein localises to the nucleus. This Oryza sativa subsp. japonica (Rice) protein is Putative B3 domain-containing protein Os10g0537100.